The chain runs to 59 residues: MRCLPVFVILLLLIASAPSVDARPKTKDDMPLASFHDNAKRILQILQDRNACCIVRQCC.

The first 22 residues, 1–22, serve as a signal peptide directing secretion; the sequence is MRCLPVFVILLLLIASAPSVDA. The propeptide occupies 23 to 48; that stretch reads RPKTKDDMPLASFHDNAKRILQILQD.

Post-translationally, contains 2 disulfide bonds that can be either 'C1-C3, C2-C4' or 'C1-C4, C2-C3', since these disulfide connectivities have been observed for conotoxins with cysteine framework V (for examples, see AC P0DQQ7 and AC P81755). As to expression, expressed by the venom duct.

It is found in the secreted. This is Conotoxin mr5a from Conus marmoreus (Marble cone).